Reading from the N-terminus, the 480-residue chain is Protein nucleotidyltransferase YdiU (480 aa).

ATP contacts are provided by Gly86, Gly88, Arg89, Lys109, Asp121, Gly122, Arg172, and Arg179. Residue Asp248 is the Proton acceptor of the active site. The Mg(2+) site is built by Asn249 and Asp258. Asp258 is an ATP binding site.

Belongs to the SELO family. Requires Mg(2+) as cofactor. The cofactor is Mn(2+).

It catalyses the reaction L-seryl-[protein] + ATP = 3-O-(5'-adenylyl)-L-seryl-[protein] + diphosphate. It carries out the reaction L-threonyl-[protein] + ATP = 3-O-(5'-adenylyl)-L-threonyl-[protein] + diphosphate. The enzyme catalyses L-tyrosyl-[protein] + ATP = O-(5'-adenylyl)-L-tyrosyl-[protein] + diphosphate. The catalysed reaction is L-histidyl-[protein] + UTP = N(tele)-(5'-uridylyl)-L-histidyl-[protein] + diphosphate. It catalyses the reaction L-seryl-[protein] + UTP = O-(5'-uridylyl)-L-seryl-[protein] + diphosphate. It carries out the reaction L-tyrosyl-[protein] + UTP = O-(5'-uridylyl)-L-tyrosyl-[protein] + diphosphate. In terms of biological role, nucleotidyltransferase involved in the post-translational modification of proteins. It can catalyze the addition of adenosine monophosphate (AMP) or uridine monophosphate (UMP) to a protein, resulting in modifications known as AMPylation and UMPylation. In Salmonella paratyphi B (strain ATCC BAA-1250 / SPB7), this protein is Protein nucleotidyltransferase YdiU.